Consider the following 334-residue polypeptide: tRNA-dihydrouridine(20/20a) synthase (334 aa).

FMN-binding positions include 17-19 (PMM) and Gln70. Cys100 serves as the catalytic Proton donor. Residues Lys139, His171, 211–213 (NGG), and 233–234 (GR) each bind FMN.

This sequence belongs to the Dus family. DusA subfamily. FMN is required as a cofactor.

It carries out the reaction 5,6-dihydrouridine(20) in tRNA + NADP(+) = uridine(20) in tRNA + NADPH + H(+). It catalyses the reaction 5,6-dihydrouridine(20) in tRNA + NAD(+) = uridine(20) in tRNA + NADH + H(+). The catalysed reaction is 5,6-dihydrouridine(20a) in tRNA + NADP(+) = uridine(20a) in tRNA + NADPH + H(+). The enzyme catalyses 5,6-dihydrouridine(20a) in tRNA + NAD(+) = uridine(20a) in tRNA + NADH + H(+). In terms of biological role, catalyzes the synthesis of 5,6-dihydrouridine (D), a modified base found in the D-loop of most tRNAs, via the reduction of the C5-C6 double bond in target uridines. Specifically modifies U20 and U20a in tRNAs. This is tRNA-dihydrouridine(20/20a) synthase (dus2) from Synechocystis sp. (strain ATCC 27184 / PCC 6803 / Kazusa).